The sequence spans 217 residues: Claudin-9 (217 aa).

Residues 1–7 (MASTGLE) lie on the Cytoplasmic side of the membrane. A helical membrane pass occupies residues 8-28 (LLGMTLAVLGWLGTLVSCALP). Over 29–81 (LWKVTAFIGNSIVVAQVVWEGLWMSCVVQSTGQMQCKVYDSLLALPQDLQAAR) the chain is Extracellular. Residues 82 to 102 (ALCVIALLLALLGLLVAITGA) traverse the membrane as a helical segment. Over 103-116 (QCTTCVEDEGAKAR) the chain is Cytoplasmic. The helical transmembrane segment at 117 to 137 (IVLTAGVILLLAGILVLIPVC) threads the bilayer. Residues 138–159 (WTAHAIIQDFYNPLVAEALKRE) are Extracellular-facing. Residues 160-180 (LGASLYLGWAAAALLMLGGGL) form a helical membrane-spanning segment. At 181–217 (LCCTCPPPQVERPRGPRLGYSIPSRSGASGLDKRDYV) the chain is on the cytoplasmic side. Residues 194-217 (RGPRLGYSIPSRSGASGLDKRDYV) are disordered.

It belongs to the claudin family. In terms of assembly, interacts with CLDN1, CD81 and OCLN. Expressed in the liver, in peripheral blood mononuclear cells and hepatocarcinoma cell lines.

The protein localises to the cell junction. It is found in the tight junction. The protein resides in the cell membrane. Plays a major role in tight junction-specific obliteration of the intercellular space, through calcium-independent cell-adhesion activity. Its function is as follows. (Microbial infection) Acts as a receptor for hepatitis C virus (HCV) entry into hepatic cells. This is Claudin-9 (CLDN9) from Homo sapiens (Human).